The following is a 324-amino-acid chain: uncharacterized protein (324 aa).

A run of 8 helical transmembrane segments spans residues 4–24, 63–83, 106–128, 132–151, 179–199, 209–229, 246–266, and 282–302; these read GNKVVISWIVSIGFVGMPEFM, AALLLEYGWVLLVLIGLEGIL, ALFYGLAGAFVLRFGSLFAISFL, WQVQAIGAIYLLYISASHLL, LADIAFAVDSILAAVALAVTL, GLDGGQFLVILAGGIIGLVIM, LETAAFVIVGWVGVKLALYTL, and GTWKLIFWGVLAAIAVCGWFM.

The protein belongs to the TerC family.

Its subcellular location is the cell membrane. This is an uncharacterized protein from Bacillus subtilis (strain 168).